Consider the following 300-residue polypeptide: D-alanine--D-alanine ligase (300 aa).

One can recognise an ATP-grasp domain in the interval 99–293 (KKILKYANIN…FAELLNSIVK (195 aa)). 126–181 (IEKIGYPVFVKPNSGGSSVATNLVKDKEGIKEAVELALKYDKEVMIENYTKGEEIT) serves as a coordination point for ATP. Aspartate 248, glutamate 260, and asparagine 262 together coordinate Mg(2+).

Belongs to the D-alanine--D-alanine ligase family. Mg(2+) is required as a cofactor. It depends on Mn(2+) as a cofactor.

The protein localises to the cytoplasm. The enzyme catalyses 2 D-alanine + ATP = D-alanyl-D-alanine + ADP + phosphate + H(+). Its pathway is cell wall biogenesis; peptidoglycan biosynthesis. Cell wall formation. The polypeptide is D-alanine--D-alanine ligase (Clostridium botulinum (strain ATCC 19397 / Type A)).